The sequence spans 948 residues: Coatomer subunit beta-1 (948 aa).

6 HEAT repeats span residues 49–87 (ETIPQLFITIIRYVLPSEDHTIQKLLLLYLELIEKTDSK), 92–126 (PEMILICQNLRNNLQHPNEYIRGVTLRFLCRMKET), 127–164 (EIVEPLTPSVLQNLEHRHPFVRRNAILAIMSIYKLPQG), 274–311 (TAIRAAANTYCQLLLSQSDNNVKLILLDRLYELKTLHR), 312–349 (DIMVELIIDVLRALSSPNLDIRRKTLDISLDLITHHNI), and 391–428 (EVASTVVHLLMDFLGDSNVASALDVVVFVREIIETNPK).

As to quaternary structure, oligomeric complex that consists of at least the alpha, beta, beta', gamma, delta, epsilon and zeta subunits.

Its subcellular location is the cytoplasm. The protein resides in the golgi apparatus membrane. It localises to the cytoplasmic vesicle. It is found in the COPI-coated vesicle membrane. The coatomer is a cytosolic protein complex that binds to dilysine motifs and reversibly associates with Golgi non-clathrin-coated vesicles, which further mediate biosynthetic protein transport from the ER, via the Golgi up to the trans Golgi network. Coatomer complex is required for budding from Golgi membranes, and is essential for the retrograde Golgi-to-ER transport of dilysine-tagged proteins. The protein is Coatomer subunit beta-1 of Arabidopsis thaliana (Mouse-ear cress).